The chain runs to 634 residues: Heat shock 70-related protein 1, mitochondrial (634 aa).

The N-terminal 20 residues, 1–20, are a transit peptide targeting the mitochondrion; it reads MFARRVCGSAAASAACLARH. The stretch at 538-614 forms a coiled coil; sequence SEQHAEADRV…AAATDKLQKA (77 aa).

This sequence belongs to the heat shock protein 70 family.

It localises to the mitochondrion. The polypeptide is Heat shock 70-related protein 1, mitochondrial (HSP70.1) (Leishmania major).